We begin with the raw amino-acid sequence, 615 residues long: UvrABC system protein C (615 aa).

The GIY-YIG domain occupies 14–91 (TSPGCYIHKD…IKENKPKYNI (78 aa)). The region spanning 196–231 (NKIIDELKGKMAAAAQTMEFERAAEYRDLIQAIGTL) is the UVR domain.

The protein belongs to the UvrC family. As to quaternary structure, interacts with UvrB in an incision complex.

It is found in the cytoplasm. In terms of biological role, the UvrABC repair system catalyzes the recognition and processing of DNA lesions. UvrC both incises the 5' and 3' sides of the lesion. The N-terminal half is responsible for the 3' incision and the C-terminal half is responsible for the 5' incision. The protein is UvrABC system protein C of Streptococcus pneumoniae serotype 19F (strain G54).